The primary structure comprises 181 residues: ATP-dependent protease subunit ClpQ (181 aa).

Ser2 is a catalytic residue. Residues Gly165, Cys168, and Thr171 each contribute to the Na(+) site.

Belongs to the peptidase T1B family. HslV subfamily. In terms of assembly, a double ring-shaped homohexamer of ClpQ is capped on each side by a ring-shaped ClpY homohexamer. The assembly of the ClpQ/ClpY complex is dependent on binding of ATP.

The protein resides in the cytoplasm. In terms of biological role, protease subunit of a proteasome-like degradation complex. This Bacillus velezensis (strain DSM 23117 / BGSC 10A6 / LMG 26770 / FZB42) (Bacillus amyloliquefaciens subsp. plantarum) protein is ATP-dependent protease subunit ClpQ (clpQ).